A 124-amino-acid polypeptide reads, in one-letter code: Fluoride-specific ion channel FluC (124 aa).

Helical transmembrane passes span 5–25, 38–58, 69–89, and 99–119; these read ILAV…TGTW, TLAV…LFLL, GLIV…LDTL, and LALG…WAGL. Na(+) contacts are provided by Gly-76 and Thr-79.

Belongs to the fluoride channel Fluc/FEX (TC 1.A.43) family.

It is found in the cell inner membrane. It catalyses the reaction fluoride(in) = fluoride(out). Na(+) is not transported, but it plays an essential structural role and its presence is essential for fluoride channel function. In terms of biological role, fluoride-specific ion channel. Important for reducing fluoride concentration in the cell, thus reducing its toxicity. This Pseudomonas syringae pv. syringae (strain B728a) protein is Fluoride-specific ion channel FluC.